Here is a 246-residue protein sequence, read N- to C-terminus: tRNA (guanine-N(1)-)-methyltransferase (246 aa).

S-adenosyl-L-methionine contacts are provided by residues glycine 113 and 133 to 138 (IGDYVL).

Belongs to the RNA methyltransferase TrmD family. Homodimer.

Its subcellular location is the cytoplasm. It catalyses the reaction guanosine(37) in tRNA + S-adenosyl-L-methionine = N(1)-methylguanosine(37) in tRNA + S-adenosyl-L-homocysteine + H(+). Its function is as follows. Specifically methylates guanosine-37 in various tRNAs. In Haemophilus influenzae (strain 86-028NP), this protein is tRNA (guanine-N(1)-)-methyltransferase.